The chain runs to 273 residues: Protein BMH2 (273 aa).

Serine 2 bears the N-acetylserine mark. Residues 236 to 273 form a disordered region; sequence DISESGQEDQQQQQQQQQQQQQQQQQAPAEQTQGEPTK. Residues 245 to 261 are compositionally biased toward low complexity; it reads QQQQQQQQQQQQQQQQQ. The span at 262–273 shows a compositional bias: polar residues; sequence APAEQTQGEPTK.

Belongs to the 14-3-3 family. Interacts with NTH1 (via N-terminus when phosphorylated by PKA); the interaction is direct and activates NTH1. Interacts with FIN1.

It localises to the cytoplasm. The protein localises to the nucleus. The sequence is that of Protein BMH2 (BMH2) from Saccharomyces cerevisiae (strain ATCC 204508 / S288c) (Baker's yeast).